The chain runs to 84 residues: MTPLGLVWSTTLRCAPLDACTRATAAGPKNPATTEAPTTIVTFPKLFINTVTALPSFFPNTESVAFDSSVSLISLPALSGFSVK.

In Crustacea (WSSV), this protein is ICP35.